Reading from the N-terminus, the 1036-residue chain is Mitogen-activated protein kinase kinase kinase 21 (1036 aa).

The tract at residues 1-36 (MALRGAAGATDTPVSSAGGAPGGSASSSSTSSGGSA) is disordered. The span at 15–36 (SSAGGAPGGSASSSSTSSGGSA) shows a compositional bias: low complexity. The SH3 domain occupies 38-102 (AGAGLWAALY…PANYVAPCRP (65 aa)). A Protein kinase domain is found at 124-401 (LELKELIGAG…ALILEQLTAI (278 aa)). Residues 130-138 (IGAGGFGQV) and Lys-151 each bind ATP. Residue Asp-263 is the Proton acceptor of the active site. Thr-299 carries the phosphothreonine; by autocatalysis modification. Phosphoserine; by autocatalysis and MAP4K1 is present on Ser-303. Leucine-zipper stretches follow at residues 425 to 446 (IQQM…EEEL) and 460 to 481 (LKRR…ELNI). Positions 517–551 (SDFQHKITVQASPNLDKRRSLNSSSSSPPSSPTMM) are disordered. Residues Ser-528, Ser-543, and Ser-547 each carry the phosphoserine modification. A Phosphothreonine modification is found at Thr-592. Phosphoserine is present on Ser-614. Residues 748 to 763 (AEEPLPKEEKKKREGI) are compositionally biased toward basic and acidic residues. Disordered regions lie at residues 748-791 (AEEP…SSPP) and 923-954 (PHSH…RSRS).

It belongs to the protein kinase superfamily. STE Ser/Thr protein kinase family. MAP kinase kinase kinase subfamily. Homodimer. Interacts with TLR4. Mg(2+) serves as cofactor. In terms of processing, autophosphorylation on serine and threonine residues within the activation loop plays a role in enzyme activation.

It catalyses the reaction L-seryl-[protein] + ATP = O-phospho-L-seryl-[protein] + ADP + H(+). It carries out the reaction L-threonyl-[protein] + ATP = O-phospho-L-threonyl-[protein] + ADP + H(+). With respect to regulation, homodimerization via the leucine zipper domains is required for autophosphorylation and subsequent activation. In terms of biological role, negative regulator of TLR4 signaling. Does not activate JNK1/MAPK8 pathway, p38/MAPK14, nor ERK2/MAPK1 pathways. The sequence is that of Mitogen-activated protein kinase kinase kinase 21 from Homo sapiens (Human).